The chain runs to 635 residues: Paraneoplastic antigen-like protein 8B (635 aa).

3 disordered regions span residues 115 to 202 (PTQA…DESL), 260 to 332 (TDKS…NPEF), and 492 to 635 (AARE…PKCR). A compositionally biased stretch (polar residues) spans 133 to 147 (SETQAQDSGEVTGQA). Residues 156-183 (NPRRGRRGRRNRTRRNRLTQKGKKRSRG) are compositionally biased toward basic residues. A compositionally biased stretch (basic and acidic residues) spans 261–273 (DKSKKEEAEKEPA). Composition is skewed to acidic residues over residues 302-329 (PDEE…ELDN) and 502-524 (GSEE…EASE). Residues 531–540 (RKPRAKRART) are compositionally biased toward basic residues. The segment covering 541 to 557 (APRGLTPAGAPPTASGA) has biased composition (low complexity). 2 stretches are compositionally biased toward basic residues: residues 558–568 (RKTRAGGRGRG) and 619–635 (ARGK…PKCR).

The protein belongs to the PNMA family.

The chain is Paraneoplastic antigen-like protein 8B from Homo sapiens (Human).